The chain runs to 1572 residues: MPEVRDWRQLAKTRLEYELLTNELFHLWEFTSLVEYDPLFRNTSNSFKTFLQERGLDVESSLEQDDMKESNASRRLKRRNVISGTADSSSDKNNIWGQVMPLVDQEYSELQEKLRASVCGRRGRKRTQQVASVPAESEEDVAVPRPNKKRQTVVTAQGSAQNKLNTPVVSSPKKSLKQTADKKSKLNKRDSSTNDISVESEDPPVKDITNTGQGKSKARLKSSKAKSKKRAVKSQTELVRKQSPEIKNESKRTKADPTHTNDDGNDNRKTNNKSKNIINNNESGLKTSLNTTGDIIDDEEYYFTSSSEDDDNEKPRTALQKKSLPNRLKVKLHVNAPRQTITNPLHVLKPEYADVHSFLQSYKSLDEDVSLEEYDSYIKEQRKTAKLIRIGFERGAIKYDPQTDSLQSLSLRDVMPPSNAAEPISVYYKEQSKHTFQDHLVNQGIVLSKSFQDSRRSQIAKARRVAQIIESHFKHIAGAEERKLKEEEKRKKNLARFAMQAVKKRWTMAEKAYKVLKKDELDQLERIQGKQHLTEMLEQSTQLLGAQLNQLDSCTYPSEASDASSEFSANEESDGNSDIDDEMMSTSSCDSDKEGNTERIGNDMELSVEELRSKYAQLNKINDFGNETSKSAADESIFDEASDSVSDSMEDSLSSSESETEDADASAQEDTPGLSALLGNIDENEEDVEADVNFDADSSSDDGLDGDSSGAENNSKTEELPSPPKSDNELKDEKAETTESVTSPAAADPLAVSDVPVPSLLRGTLRIYQKQGLNWLASLYNNKTNGILADEMGLGKTIQTISLLAYLACEKENWGPHLIVVPTSVLLNWEMEFKRFAPGFKVLTYYGSPQQRREKRKGWNKPDAFHVCITSYQLVVHDQHSFKRKKWQYMILDEAHNIKNFRSTRWQALLNFNTERRLLLTGTPLQNNLAELWSLLYFLMPQTALENGKVSGFADLDAFQQWFGRPVDKIVETGENYEQDEETKKTVSKLHQVLRPYLLRRLKADVEKQMPGKYEHIIYCRLSKRQRFLYDDFMSRAQTKETLASGNFMSIINCLMQLRKVCNHPDLFEVRPILTSFCIEDSVSKSYCDLNNYVYNRLHENQFETSVDLSNLNFQFTSNDKTLSTNHSEKISELQCVQPILKEISRLKQLNENDSPVTQPDFQDLNQYYSYAKHNKINEIIGQLEHLNYMNNLRCNRRPMYGSNIVKLLTVGPKKFIDCELTQESIKPLETRLLEGKETIEKFAVITPPVVTLDIRERAVGVDDNNKRFEESVKHHLVSQMRSLENPFHQLQTKLSVAFPDKSLLQYDCGKLQKLAQLLQNLKDNGHRALIFTQMTKVLDILEQFLNFHGYLYMRLDGATKIEDRQILTERFNSDPRITVFILSSRSGGLGINLTGADTVIFYDSDWNPAMDKQCQDRCHRIGQTRDVHIYRFVSDHTIESNILKKANQKRHLDNVVIQTGDFTTDYFTKLSVKDLLGAEAPEDIPDDKPLLQDQKNLNKLLAQAEDEDDAKAAKSALREVNVDNEDFQEGSVAAQDGNSDNENNEDSEDEYGGTSHVEEYMVRFIANGFYY.

Disordered regions lie at residues 61 to 94, 119 to 291, and 304 to 323; these read SLEQDDMKESNASRRLKRRNVISGTADSSSDKNN, CGRR…SLNT, and TSSSEDDDNEKPRTALQKKS. Composition is skewed to polar residues over residues 82–94 and 152–173; these read ISGTADSSSDKNN and TVVTAQGSAQNKLNTPVVSSPK. Residues 179–192 show a composition bias toward basic and acidic residues; it reads TADKKSKLNKRDSS. The segment covering 216–232 has biased composition (basic residues); it reads SKARLKSSKAKSKKRAV. Residues 238-269 show a composition bias toward basic and acidic residues; it reads LVRKQSPEIKNESKRTKADPTHTNDDGNDNRK. The segment covering 282–291 has biased composition (polar residues); sequence ESGLKTSLNT. The region spanning 424–496 is the HSA domain; it reads ISVYYKEQSK…EEKRKKNLAR (73 aa). Disordered regions lie at residues 555–604, 624–675, and 694–749; these read TYPS…GNDM, FGNE…PGLS, and FDAD…AADP. Positions 558-568 are enriched in low complexity; sequence SEASDASSEFS. Positions 569–583 are enriched in acidic residues; sequence ANEESDGNSDIDDEM. Basic and acidic residues predominate over residues 590 to 602; the sequence is DSDKEGNTERIGN. Positions 643–657 are enriched in low complexity; that stretch reads DSVSDSMEDSLSSSE. A compositionally biased stretch (acidic residues) spans 694-705; that stretch reads FDADSSSDDGLD. Residues 726–737 show a composition bias toward basic and acidic residues; that stretch reads SDNELKDEKAET. One can recognise a Helicase ATP-binding domain in the interval 777–942; it reads ASLYNNKTNG…WSLLYFLMPQ (166 aa). 790 to 797 contacts ATP; it reads DEMGLGKT. A DEAH box motif is present at residues 893-896; the sequence is DEAH. Positions 1314-1464 constitute a Helicase C-terminal domain; sequence KLAQLLQNLK…NVVIQTGDFT (151 aa). Residues 1505–1556 are disordered; that stretch reads AEDEDDAKAAKSALREVNVDNEDFQEGSVAAQDGNSDNENNEDSEDEYGGTS. Positions 1511–1522 are enriched in basic and acidic residues; the sequence is AKAAKSALREVN. Over residues 1543-1552 the composition is skewed to acidic residues; that stretch reads ENNEDSEDEY.

The protein belongs to the SNF2/RAD54 helicase family. SWR1 subfamily. Component of the SWR1 chromatin-remodeling complex.

The protein localises to the nucleus. It catalyses the reaction ATP + H2O = ADP + phosphate + H(+). Its function is as follows. Catalytic component of the SWR1 complex which mediates the ATP-dependent exchange of histone H2A for the H2A variant HZT1 leading to transcriptional regulation of selected genes by chromatin remodeling. This is Helicase SWR1 (SWR1) from Kluyveromyces lactis (strain ATCC 8585 / CBS 2359 / DSM 70799 / NBRC 1267 / NRRL Y-1140 / WM37) (Yeast).